A 239-amino-acid polypeptide reads, in one-letter code: Putative HTH-type transcriptional regulator YkgA (239 aa).

Residues 19-117 (QQLLEWIECN…GCSPREYRHR (99 aa)) enclose the HTH araC/xylS-type domain. DNA-binding regions (H-T-H motif) lie at residues 36 to 57 (EDIAQKSGYSRRNIQLLFRNFM) and 84 to 107 (MLDIALSLHFDSQQSFSREFKKLF).

This is Putative HTH-type transcriptional regulator YkgA (ykgA) from Escherichia coli (strain K12).